Reading from the N-terminus, the 540-residue chain is MAKQIKYGEEARKALERGVNAVANTVKVTLGPRGRNVVLDKKYGTPTVTNDGVTIAREIELEDPFENQGAQLLKEAATKTNDVAGDGTTTATLLAQVMVLEGLKNLAAGANPMLLRRGMAKAVEAAVEGLRRISKPIDNKESIAHVAAISAADEEIGQLIAEAMEKVGKDGVITVEESKTIGTTLEVVEGMQFDRGYISPYMVTDAEKMEAVLEEPVILITDKKLSSVQDLLPLLEQIVQHGKKLLIIADDVEGEALATLVVNKLRGTFSCVAVKAPGFGDRRKEMLQDIAILTGGQVISEELGYDLKDVTLDMLGRARQVKVTKEHTTIVGGAGNPEDIKKRINQIKAQIEETTSDYDREKLQERLAKLAGGVAVIQVGAATETELKEKKHRIEDALAATKAAVEEGIVPGGGVALLNVIEDVQKVVDSLEGDFKTGAKIVLKALEAPVRQIAENAGVDGSIIVEKIKAAKDPNFGYDAYREEFTDMIKRGIIDPTKVTRTALQNAASIASMILTTEAIVVDVPEKEKSNIPGAGMDMM.

Residues 29-32 (TLGP), 86-90 (DGTTT), G413, and D495 each bind ATP.

The protein belongs to the chaperonin (HSP60) family. In terms of assembly, forms a cylinder of 14 subunits composed of two heptameric rings stacked back-to-back. Interacts with the co-chaperonin GroES.

Its subcellular location is the cytoplasm. It carries out the reaction ATP + H2O + a folded polypeptide = ADP + phosphate + an unfolded polypeptide.. In terms of biological role, together with its co-chaperonin GroES, plays an essential role in assisting protein folding. The GroEL-GroES system forms a nano-cage that allows encapsulation of the non-native substrate proteins and provides a physical environment optimized to promote and accelerate protein folding. The polypeptide is Chaperonin GroEL (Caldanaerobacter subterraneus subsp. tengcongensis (strain DSM 15242 / JCM 11007 / NBRC 100824 / MB4) (Thermoanaerobacter tengcongensis)).